The chain runs to 355 residues: Countin-like protein (355 aa).

The first 27 residues, 1–27 (MNKSLFSLILLIITIFNLASNINIVSA), serve as a signal peptide directing secretion. Residues 63-83 (NNHEDNNNNNNNNNNNNNAYN) form a disordered region. The segment covering 69–83 (NNNNNNNNNNNNAYN) has biased composition (low complexity). A Saposin B-type domain is found at 93–177 (GDIECVVCLD…ELITACSTPK (85 aa)). Cystine bridges form between C97–C173, C100–C167, and C128–C140. Residues N132, N209, N242, N253, N254, N282, and N303 are each glycosylated (N-linked (GlcNAc...) asparagine). The interval 290 to 355 (ISNPTPTPTP…SSHYKNKINK (66 aa)) is disordered. The span at 301-342 (PSNSTTPTPTPTNSTPTPTSTSTPTSTPTSTPTPTPTSSSST) shows a compositional bias: low complexity. Positions 345–355 (HSSHYKNKINK) are enriched in basic residues.

This sequence belongs to the countin family.

Its subcellular location is the secreted. In Dictyostelium discoideum (Social amoeba), this protein is Countin-like protein.